Here is a 99-residue protein sequence, read N- to C-terminus: Small ribosomal subunit protein bS20 (99 aa).

The protein belongs to the bacterial ribosomal protein bS20 family.

In terms of biological role, binds directly to 16S ribosomal RNA. In Synechococcus sp. (strain CC9311), this protein is Small ribosomal subunit protein bS20.